Consider the following 561-residue polypeptide: Putative cuticle collagen 145 (561 aa).

A signal peptide spans 1 to 30 (MEKILVTLSTGAASIAVLAVLFTIPSLYNT). A compositionally biased stretch (pro residues) spans 100-112 (TCPPGPPGPPGQP). Disordered stretches follow at residues 100–134 (TCPP…TYAP), 148–271 (PQGP…PGGP), 367–398 (TCPP…NTAT), and 422–540 (TGPA…GPGL). Triple-helical region stretches follow at residues 102 to 127 (PPGP…KGED) and 153 to 276 (GPEG…LPGN). Composition is skewed to low complexity over residues 164-209 (AGPD…PGQD) and 219-265 (APGA…DGQP). Positions 367 to 379 (TCPPGPPGPPGQP) are enriched in pro residues. Residues 413 to 544 (KCPQGPAGPT…PGGPGLPGND (132 aa)) are triple-helical region. 2 stretches are compositionally biased toward low complexity: residues 422-467 (TGPA…PGQD) and 486-532 (APGA…DGQP). A Collagen-like domain is found at 485 to 543 (GAPGAPGNAGPAGPAGQDGFPGQDGQPGPAGPAGQDGFPGNAGSDGQPGAPGGPGLPGN).

The protein belongs to the cuticular collagen family. Collagen polypeptide chains are complexed within the cuticle by disulfide bonds and other types of covalent cross-links.

Its function is as follows. Nematode cuticles are composed largely of collagen-like proteins. The cuticle functions both as an exoskeleton and as a barrier to protect the worm from its environment. This is Putative cuticle collagen 145 from Caenorhabditis briggsae.